An 806-amino-acid chain; its full sequence is Ankyrin repeat, bromo and BTB domain-containing protein DDB_G0293800 (806 aa).

ANK repeat units lie at residues 1 to 30 (MSNK…DVNQ), 34 to 63 (SNRY…LVNC), 67 to 96 (RGAT…DVNC), 100 to 130 (AGST…DVNL), and 134 to 163 (EGST…RADV). Over residues 210 to 228 (GVGKKEDDDNNMKIDKQES) the composition is skewed to basic and acidic residues. A disordered region spans residues 210 to 231 (GVGKKEDDDNNMKIDKQESEQQ). The BTB domain occupies 239–307 (SDITFLIENQ…IYTGSIEKFE (69 aa)). Disordered stretches follow at residues 423 to 517 (TRTA…SDSM) and 621 to 743 (QNFP…EERR). Low complexity-rich tracts occupy residues 426–436 (ANANASNSNQS) and 443–511 (TSTT…SSSS). Residues 516–622 (SMNEKNLTFC…NAFDQKFLQN (107 aa)) enclose the Bromo domain. Residues 626 to 641 (EKPPTYKPPPPTPTPI) show a composition bias toward pro residues. Residues 642–658 (PTQQQQQQSTSSTSTPT) show a composition bias toward low complexity. Over residues 666–675 (DEHVKVKEDT) the composition is skewed to basic and acidic residues. A compositionally biased stretch (polar residues) spans 676 to 693 (NSAQPTSSSSNHTNGENA). Low complexity predominate over residues 694–733 (SSSSSSSSSKQSNNNNNNNNNNNSNSTTNSSSSSSSTTTT). Positions 727-806 (SSSTTTTQKK…ECFKKQKQDE (80 aa)) constitute an NET domain.

This is Ankyrin repeat, bromo and BTB domain-containing protein DDB_G0293800 from Dictyostelium discoideum (Social amoeba).